We begin with the raw amino-acid sequence, 81 residues long: Costars family protein ABRACL (81 aa).

Met1 bears the N-acetylmethionine mark.

The protein belongs to the costars family.

The protein is Costars family protein ABRACL (Abracl) of Mus musculus (Mouse).